A 312-amino-acid chain; its full sequence is Olfactory receptor 6C68 (312 aa).

Topologically, residues 1–23 (MRKHTAITTFILLGLTEDPQLQV) are extracellular. A helical transmembrane segment spans residues 24–44 (LLFMFLFITYMLSVTGKLTII). The Cytoplasmic segment spans residues 45-55 (ALTMLDPHLKT). The helical transmembrane segment at 56–76 (PMYFFLQNLSFLEISFTATCV) threads the bilayer. The Extracellular portion of the chain corresponds to 77 to 95 (PRFLYSISTGNKIITYNAC). An intrachain disulfide couples Cys-95 to Cys-177. A helical membrane pass occupies residues 96-116 (VIQLFFADLFGVTEFFLLATM). The Cytoplasmic segment spans residues 117 to 143 (SYDRYVAICKPLHYMAIMSNKVCKTMV). Residues 144-164 (ICCWMAALMIILPPLSLGFHL) traverse the membrane as a helical segment. At 165–197 (EFCDSNVINHFGCDALPILKIPCSDTSLIEQMV) the chain is on the extracellular side. The helical transmembrane segment at 198–218 (VASAVLTFIITLVCVVLSYTY) threads the bilayer. The Cytoplasmic portion of the chain corresponds to 219 to 239 (IIRTILKFPSVQQKKKAFSTC). Residues 240–260 (SSHITVVSITYGSCIFIYIKP) traverse the membrane as a helical segment. The Extracellular portion of the chain corresponds to 261–271 (SAKEEVNINKG). Residues 272–292 (VSVLISSISPMLNSFIYTLRN) traverse the membrane as a helical segment. The Cytoplasmic portion of the chain corresponds to 293–312 (EQVKQAFHDSLKKIAFRLKK).

This sequence belongs to the G-protein coupled receptor 1 family.

The protein resides in the cell membrane. Its function is as follows. Odorant receptor. This chain is Olfactory receptor 6C68 (OR6C68), found in Homo sapiens (Human).